The sequence spans 747 residues: Polyribonucleotide nucleotidyltransferase (747 aa).

Residues Asp487 and Asp493 each contribute to the Mg(2+) site. One can recognise a KH domain in the interval 554-613; that stretch reads PSTTTIKIDKDKIRDVIGPGGKVIKEICETSDAKIDISDDGTVSVYASDRDKLKVALDKI. The S1 motif domain occupies 623-691; sequence GEIFNGTVMK…NKGKAKLTIK (69 aa). The tract at residues 691–747 is disordered; that stretch reads KNADKDKSSNNPKQKNNVNNSKENSEPERRDSSKKRAWNEDNNSDTTEVITERKYFN. Residues 699–712 show a composition bias toward low complexity; the sequence is SNNPKQKNNVNNSK. A compositionally biased stretch (polar residues) spans 730–739; sequence EDNNSDTTEV.

It belongs to the polyribonucleotide nucleotidyltransferase family. Mg(2+) serves as cofactor.

It localises to the cytoplasm. It catalyses the reaction RNA(n+1) + phosphate = RNA(n) + a ribonucleoside 5'-diphosphate. Functionally, involved in mRNA degradation. Catalyzes the phosphorolysis of single-stranded polyribonucleotides processively in the 3'- to 5'-direction. The polypeptide is Polyribonucleotide nucleotidyltransferase (Rickettsia akari (strain Hartford)).